A 280-amino-acid polypeptide reads, in one-letter code: Probable endonuclease lcl3 (280 aa).

Residues 50–67 (TLIPTLILTTAILSAARF) form a helical membrane-spanning segment. In terms of domain architecture, TNase-like spans 89–257 (RSIYGKVTSV…KLKGNGMWKG (169 aa)). The active site involves R140. Position 145 (D145) interacts with Ca(2+). Residues E148 and R188 contribute to the active site.

It belongs to the LCL3 family.

It localises to the mitochondrion. The protein resides in the membrane. This Emericella nidulans (strain FGSC A4 / ATCC 38163 / CBS 112.46 / NRRL 194 / M139) (Aspergillus nidulans) protein is Probable endonuclease lcl3 (lcl3).